A 709-amino-acid chain; its full sequence is Polyribonucleotide nucleotidyltransferase (709 aa).

Mg(2+)-binding residues include Asp487 and Asp493. The region spanning 554-613 (PRIHTMKISSDKIKDVIGKGGAVIRALCEETGTTIEIEDDGTIKIAATEGAAAKEAIRRI) is the KH domain. The 69-residue stretch at 623 to 691 (GKIYTGKVMR…RQGRIRLSIK (69 aa)) folds into the S1 motif domain.

Belongs to the polyribonucleotide nucleotidyltransferase family. In terms of assembly, component of the RNA degradosome, which is a multiprotein complex involved in RNA processing and mRNA degradation. Requires Mg(2+) as cofactor.

The protein localises to the cytoplasm. It carries out the reaction RNA(n+1) + phosphate = RNA(n) + a ribonucleoside 5'-diphosphate. In terms of biological role, involved in mRNA degradation. Catalyzes the phosphorolysis of single-stranded polyribonucleotides processively in the 3'- to 5'-direction. This Aliivibrio fischeri (strain MJ11) (Vibrio fischeri) protein is Polyribonucleotide nucleotidyltransferase.